The sequence spans 259 residues: Thiazole synthase (259 aa).

Lysine 99 serves as the catalytic Schiff-base intermediate with DXP. 1-deoxy-D-xylulose 5-phosphate contacts are provided by residues glycine 160, alanine 186–glycine 187, and asparagine 208–threonine 209.

It belongs to the ThiG family. In terms of assembly, homotetramer. Forms heterodimers with either ThiH or ThiS.

It localises to the cytoplasm. It carries out the reaction [ThiS sulfur-carrier protein]-C-terminal-Gly-aminoethanethioate + 2-iminoacetate + 1-deoxy-D-xylulose 5-phosphate = [ThiS sulfur-carrier protein]-C-terminal Gly-Gly + 2-[(2R,5Z)-2-carboxy-4-methylthiazol-5(2H)-ylidene]ethyl phosphate + 2 H2O + H(+). It functions in the pathway cofactor biosynthesis; thiamine diphosphate biosynthesis. In terms of biological role, catalyzes the rearrangement of 1-deoxy-D-xylulose 5-phosphate (DXP) to produce the thiazole phosphate moiety of thiamine. Sulfur is provided by the thiocarboxylate moiety of the carrier protein ThiS. In vitro, sulfur can be provided by H(2)S. The protein is Thiazole synthase of Porphyromonas gingivalis (strain ATCC 33277 / DSM 20709 / CIP 103683 / JCM 12257 / NCTC 11834 / 2561).